We begin with the raw amino-acid sequence, 240 residues long: Caffeoyl-CoA O-methyltransferase 5 (240 aa).

Substrate is bound at residue lysine 14. Residues threonine 56, glutamate 78, 80 to 81 (GV), serine 86, aspartate 104, and alanine 133 contribute to the S-adenosyl-L-methionine site. Aspartate 156 is a substrate binding site. Aspartate 156 is an a divalent metal cation binding site. Aspartate 158 serves as a coordination point for S-adenosyl-L-methionine. A divalent metal cation contacts are provided by aspartate 182 and asparagine 183. Asparagine 187 contacts substrate.

The protein belongs to the class I-like SAM-binding methyltransferase superfamily. Cation-dependent O-methyltransferase family. CCoAMT subfamily. Requires Mg(2+) as cofactor. As to expression, expression steadily increases from the bottom to the top of the plant.

It catalyses the reaction (E)-caffeoyl-CoA + S-adenosyl-L-methionine = (E)-feruloyl-CoA + S-adenosyl-L-homocysteine + H(+). It functions in the pathway aromatic compound metabolism; phenylpropanoid biosynthesis. In terms of biological role, methylates caffeoyl-CoA to feruloyl-CoA and 5-hydroxyferuloyl-CoA to sinapoyl-CoA. Plays a role in the synthesis of feruloylated polysaccharides. Involved in the reinforcement of the plant cell wall. Also involved in the responding to wounding or pathogen challenge by the increased formation of cell wall-bound ferulic acid polymers. Methylates 5-hydroxyferulolyl-CoA more efficiently than caffeoyl-CoA. The chain is Caffeoyl-CoA O-methyltransferase 5 (CCOAOMT5) from Nicotiana tabacum (Common tobacco).